Reading from the N-terminus, the 296-residue chain is Syntenin-2 (296 aa).

PDZ domains follow at residues 112-191 and 196-271; these read EIHL…VRDR and TVTM…IPTV.

As to quaternary structure, monomer and homodimer. Interacts with SDCBP. Interacts with TM4SF1.

It is found in the cytoplasm. The protein resides in the nucleus. It localises to the nucleolus. Its subcellular location is the nucleoplasm. The protein localises to the cell membrane. It is found in the nucleus speckle. Binds phosphatidylinositol 4,5-bisphosphate (PIP2). May play a role in the organization of nuclear PIP2, cell division and cell survival. The chain is Syntenin-2 (Sdcbp2) from Rattus norvegicus (Rat).